The sequence spans 122 residues: Large ribosomal subunit protein uL14 (122 aa).

The protein belongs to the universal ribosomal protein uL14 family. Part of the 50S ribosomal subunit. Forms a cluster with proteins L3 and L19. In the 70S ribosome, L14 and L19 interact and together make contacts with the 16S rRNA in bridges B5 and B8.

Its function is as follows. Binds to 23S rRNA. Forms part of two intersubunit bridges in the 70S ribosome. This chain is Large ribosomal subunit protein uL14, found in Corynebacterium diphtheriae (strain ATCC 700971 / NCTC 13129 / Biotype gravis).